The sequence spans 674 residues: Translation initiation factor IF-2 (674 aa).

A tr-type G domain is found at 174 to 344 (IRPPVVTVMG…LLVAELREIK (171 aa)). Residues 183 to 190 (GHVDHGKT) are G1. GTP is bound at residue 183 to 190 (GHVDHGKT). Residues 208–212 (GITQS) form a G2 region. Residues 229 to 232 (DTPG) form a G3 region. Residues 229–233 (DTPGH) and 283–286 (NKID) each bind GTP. A G4 region spans residues 283-286 (NKID). Positions 320–322 (SAR) are G5.

It belongs to the TRAFAC class translation factor GTPase superfamily. Classic translation factor GTPase family. IF-2 subfamily.

Its subcellular location is the cytoplasm. Functionally, one of the essential components for the initiation of protein synthesis. Protects formylmethionyl-tRNA from spontaneous hydrolysis and promotes its binding to the 30S ribosomal subunits. Also involved in the hydrolysis of GTP during the formation of the 70S ribosomal complex. In Pseudothermotoga lettingae (strain ATCC BAA-301 / DSM 14385 / NBRC 107922 / TMO) (Thermotoga lettingae), this protein is Translation initiation factor IF-2.